Here is a 1086-residue protein sequence, read N- to C-terminus: MVLGSSQSSAKELTTQSSIFRFLVLLLCFTSATGGQINGKLLNGNGVFVSRDELQNKNVLGVITGFDLLVVATHSRFQVFENNEERRTVGHVSLDMHPRTKFLELKLFSKSEIFYCDESSCGLCTYSGVTSSCSTFMLNGDEPKIQEILSSSAVKIENLGQIMLAISFKNEEDPDNPRTMILRYNAQDTGTVIPTAYHADSSFIHNNHALTGFEREGFVYFVMTASQIFEPEVFLHDQSNNKVTVTKVIRFCATDQTADLASKISILVGCDQEFRNISSRGETAVYDHANDLINIVMFNHTSMNHLMCRFKMANIEKRFKTIWSTCQETSFSGSTAKTTRCKYPQIFDQMKVKKGCLTYSRLDDESSPTLCVRYGRGDALDNCQLHTAKSNSYRYGWLEDYNVLQGELMMRIPYPFFGIAESLITDGKSYFAAVSGEFDMSDVLRFSASESADIRPHWRTNISVVGKFSITKTKENQLLYTTVEGLQSLDISCKGLYPNCQTLRQGGWEDPLECSWCADDNAQRTITSSEVSSCKNNLKHECPPSMRWIHKYNNNSGFTAVVDGFRALKNPKLNACGTNCVVTVVDSSSIQCDTNPDEVIGDSCKQVFLSGMIGDKNYSFPFDYQQADRGTQTDVKNSQVDDKKGSSPGWKIAIAIISVMTIILIVAIIVYYMRNRFPRIKTHVRPPIGQRIENEYDMGHMAGRQAQLAINGDNYVKVFRSMRPDLKVDFKNLRVDKLDPIGQGHYGVVYKAMYSPSKSLEEKVVCKYLKEGKISEFYEEARTMSEFDHPNILKLIGVALDDSSHLPIIITEYMAKGDLKSFIENVENTIKMRDLFEFAFDIAKGMNYMHSKKFIHRDLACRNCLLDEHLRVKIADFGLCRKVDIETELYVQMHERDLPVRWFPPEISEQGFGITSDIWSFGVVIWELFTRGSTPYSNMASWILILPWLKESETNRLRKPPYCPEKLYTDVMLACWKANPAERPQFSDLVTIIPNVVKYMEGYDRSQLQAGYERVSSRFLSLSRHDPAFPIYQNEMPNTPLLANCQNDTNDSKTLAELPSDSPSTSTAIPQSTPYQLLSECSETSV.

An N-terminal signal peptide occupies residues 1–34 (MVLGSSQSSAKELTTQSSIFRFLVLLLCFTSATG). The Extracellular portion of the chain corresponds to 35–651 (GQINGKLLNG…DKKGSSPGWK (617 aa)). Residues asparagine 276, asparagine 299, asparagine 461, asparagine 554, and asparagine 617 are each glycosylated (N-linked (GlcNAc...) asparagine). Residues 652 to 672 (IAIAIISVMTIILIVAIIVYY) traverse the membrane as a helical segment. The Cytoplasmic portion of the chain corresponds to 673–1086 (MRNRFPRIKT…LLSECSETSV (414 aa)). A Protein kinase domain is found at 735–996 (VDKLDPIGQG…SDLVTIIPNV (262 aa)). ATP-binding positions include 741–749 (IGQGHYGVV) and lysine 767. Residue aspartate 858 is the Proton acceptor of the active site. Tyrosine 890 is subject to Phosphotyrosine. Residues 1056–1086 (AELPSDSPSTSTAIPQSTPYQLLSECSETSV) form a disordered region. Positions 1061–1086 (DSPSTSTAIPQSTPYQLLSECSETSV) are enriched in polar residues.

This sequence belongs to the protein kinase superfamily. Tyr protein kinase family. As to quaternary structure, interacts (via cytoplasmic domain) with mlk-1. Interacts with shc-1 (via SH2 domain). May interact (when tyrosine-phosphorylated) with tns-1 (via SH2 domain). May be autophosphorylated on Tyr-890 following dimerization. In terms of tissue distribution, expressed in body wall and vulva muscles, pharynx, intestine, excretory canals, distal tip cells and some neurons. Expressed in D-type motor neurons upon axon injury.

The protein localises to the cell membrane. It carries out the reaction L-tyrosyl-[protein] + ATP = O-phospho-L-tyrosyl-[protein] + ADP + H(+). In terms of biological role, receptor tyrosine kinase which may phosphorylate mlk-1, a component of the mlk-1, mek-1 and kgb-1 pathway. Involved in axon regeneration after injury by promoting the generation of productive and stable growth cones. This chain is Tyrosine-protein kinase receptor svh-2, found in Caenorhabditis elegans.